The chain runs to 346 residues: D-erythrose-4-phosphate dehydrogenase (346 aa).

Position 11 to 12 (11 to 12 (RI)) interacts with NAD(+). Substrate contacts are provided by residues 163-165 (SCT), R209, 222-223 (TK), and R245. The active-site Nucleophile is the C164. Position 327 (N327) interacts with NAD(+).

Belongs to the glyceraldehyde-3-phosphate dehydrogenase family. Epd subfamily. In terms of assembly, homotetramer.

The protein localises to the cytoplasm. It carries out the reaction D-erythrose 4-phosphate + NAD(+) + H2O = 4-phospho-D-erythronate + NADH + 2 H(+). Its pathway is cofactor biosynthesis; pyridoxine 5'-phosphate biosynthesis; pyridoxine 5'-phosphate from D-erythrose 4-phosphate: step 1/5. Functionally, catalyzes the NAD-dependent conversion of D-erythrose 4-phosphate to 4-phosphoerythronate. This is D-erythrose-4-phosphate dehydrogenase from Vibrio vulnificus (strain YJ016).